Reading from the N-terminus, the 23-residue chain is Fimbrial protein (23 aa).

Cysteine 8 and cysteine 21 are oxidised to a cystine.

Belongs to the N-Me-Phe pilin family. The pili are polar flexible filaments of about 5.4 nanometers diameter and 2.5 micrometers average length; they consist of only a single polypeptide chain arranged in a helical configuration of five subunits per turn in the assembled pilus.

It is found in the fimbrium. The protein is Fimbrial protein (pil) of Pseudomonas aeruginosa.